We begin with the raw amino-acid sequence, 510 residues long: NAD(P)H-quinone oxidoreductase subunit 2 A, chloroplastic (510 aa).

Helical transmembrane passes span 24–44 (LLLF…GLIL), 57–77 (TPWL…ALLF), 99–119 (IFQF…VEYI), 124–144 (MAIT…MFLC), 149–169 (LITI…LSGY), 183–203 (YLLM…WLYG), 229–249 (ISIA…PAPF), 295–315 (WHLL…LIAI), 323–343 (MLAY…IVGD), 354–374 (YMLF…LFGL), 395–415 (ALSS…AGFF), 418–438 (LYLF…IGLL), and 484–504 (MIVC…IIAI).

Belongs to the complex I subunit 2 family. As to quaternary structure, NDH is composed of at least 16 different subunits, 5 of which are encoded in the nucleus.

Its subcellular location is the plastid. The protein localises to the chloroplast thylakoid membrane. It carries out the reaction a plastoquinone + NADH + (n+1) H(+)(in) = a plastoquinol + NAD(+) + n H(+)(out). The catalysed reaction is a plastoquinone + NADPH + (n+1) H(+)(in) = a plastoquinol + NADP(+) + n H(+)(out). Its function is as follows. NDH shuttles electrons from NAD(P)H:plastoquinone, via FMN and iron-sulfur (Fe-S) centers, to quinones in the photosynthetic chain and possibly in a chloroplast respiratory chain. The immediate electron acceptor for the enzyme in this species is believed to be plastoquinone. Couples the redox reaction to proton translocation, and thus conserves the redox energy in a proton gradient. The protein is NAD(P)H-quinone oxidoreductase subunit 2 A, chloroplastic of Nuphar advena (Common spatterdock).